Reading from the N-terminus, the 591-residue chain is Aspartate--tRNA(Asp/Asn) ligase (591 aa).

Glu176 contributes to the L-aspartate binding site. An aspartate region spans residues Gln200–Lys203. Arg222 contacts L-aspartate. Residues Arg222–Glu224 and Gln231 each bind ATP. His450 is an L-aspartate binding site. Glu484 contributes to the ATP binding site. An L-aspartate-binding site is contributed by Arg491. Gly536–Arg539 serves as a coordination point for ATP.

It belongs to the class-II aminoacyl-tRNA synthetase family. Type 1 subfamily. As to quaternary structure, homodimer.

It is found in the cytoplasm. The catalysed reaction is tRNA(Asx) + L-aspartate + ATP = L-aspartyl-tRNA(Asx) + AMP + diphosphate. Its function is as follows. Aspartyl-tRNA synthetase with relaxed tRNA specificity since it is able to aspartylate not only its cognate tRNA(Asp) but also tRNA(Asn). Reaction proceeds in two steps: L-aspartate is first activated by ATP to form Asp-AMP and then transferred to the acceptor end of tRNA(Asp/Asn). In Bacillus mycoides (strain KBAB4) (Bacillus weihenstephanensis), this protein is Aspartate--tRNA(Asp/Asn) ligase.